Consider the following 310-residue polypeptide: Tagatose-6-phosphate kinase (310 aa).

The protein belongs to the carbohydrate kinase PfkB family. LacC subfamily.

It catalyses the reaction D-tagatofuranose 6-phosphate + ATP = D-tagatofuranose 1,6-bisphosphate + ADP + H(+). The protein operates within carbohydrate metabolism; D-tagatose 6-phosphate degradation; D-glyceraldehyde 3-phosphate and glycerone phosphate from D-tagatose 6-phosphate: step 1/2. The polypeptide is Tagatose-6-phosphate kinase (Streptococcus uberis (strain ATCC BAA-854 / 0140J)).